Consider the following 4835-residue polypeptide: Midasin (4835 aa).

6 AAA-ATPase protomer regions span residues Glu-12 to Leu-161, Arg-324 to Arg-689, Met-797 to Ile-1049, Lys-1096 to Thr-1375, Ala-1489 to Arg-1738, and Ala-1821 to Ile-2110. ATP is bound by residues Gly-31–Thr-38, Gly-356–Thr-363, Gly-814–Thr-821, Gly-1127–Thr-1134, Gly-1513–Ser-1520, and Gly-1839–Ser-1846. The segment at Ser-2197–Lys-4058 is linker. Disordered stretches follow at residues Asp-4033–Val-4056 and Ile-4108–Pro-4523. Composition is skewed to acidic residues over residues Glu-4109 to Ala-4133, Glu-4141 to Ser-4150, Ala-4226 to Gln-4241, Val-4282 to Asp-4291, and Asn-4315 to Asn-4330. Polar residues predominate over residues Ile-4331 to Gln-4346. Composition is skewed to basic and acidic residues over residues Lys-4347–Asn-4360, Glu-4394–Ala-4415, and Val-4429–Arg-4438. The segment covering His-4468–Ser-4477 has biased composition (polar residues). Positions Ser-4478 to Asn-4488 are enriched in basic and acidic residues. Positions Gln-4629–Leu-4818 constitute a VWFA domain.

The protein belongs to the midasin family. In terms of assembly, associates with pre-60S ribosomes in the nucleoplasm.

The protein resides in the nucleus. Its subcellular location is the nucleolus. It localises to the nucleoplasm. Its function is as follows. Nuclear chaperone required for maturation and nuclear export of pre-60S ribosome subunits. Functions at successive maturation steps to remove ribosomal factors at critical transition points, first driving the exit of early pre-60S particles from the nucleolus and then driving late pre-60S particles from the nucleus. In Giardia intestinalis (Giardia lamblia), this protein is Midasin (MDN1).